Consider the following 43-residue polypeptide: Potassium channel toxin gamma-KTx 4.13 (43 aa).

Cystine bridges form between Cys5/Cys23, Cys11/Cys34, Cys20/Cys39, and Cys24/Cys41.

It belongs to the ergtoxin family. Gamma-KTx 4 subfamily. Expressed by the venom gland.

It localises to the secreted. In terms of biological role, reversibly blocks Kv11/ERG potassium channels. This chain is Potassium channel toxin gamma-KTx 4.13, found in Centruroides noxius (Mexican scorpion).